Consider the following 38-residue polypeptide: Cytochrome b6-f complex subunit 5 (38 aa).

The helical transmembrane segment at 5-25 (LLSGIVLGLIPITLAGLFVTA) threads the bilayer.

Belongs to the PetG family. As to quaternary structure, the 4 large subunits of the cytochrome b6-f complex are cytochrome b6, subunit IV (17 kDa polypeptide, PetD), cytochrome f and the Rieske protein, while the 4 small subunits are PetG, PetL, PetM and PetN. The complex functions as a dimer.

It is found in the plastid. The protein resides in the chloroplast thylakoid membrane. Component of the cytochrome b6-f complex, which mediates electron transfer between photosystem II (PSII) and photosystem I (PSI), cyclic electron flow around PSI, and state transitions. PetG is required for either the stability or assembly of the cytochrome b6-f complex. This is Cytochrome b6-f complex subunit 5 from Adiantum capillus-veneris (Maidenhair fern).